Consider the following 264-residue polypeptide: Putative ankyrin repeat domain-containing protein 19 (264 aa).

ANK repeat units follow at residues 67-96 (KDRT…QINI), 100-129 (LNRT…NPNI), 133-162 (YSNT…NIEA), 166-195 (EGNT…NLHA), and 199-228 (FRRT…NIFS).

In Homo sapiens (Human), this protein is Putative ankyrin repeat domain-containing protein 19 (ANKRD19P).